A 241-amino-acid chain; its full sequence is Uridylate kinase (241 aa).

Residue 9 to 10 coordinates ATP; it reads GS. A UMP-binding site is contributed by glycine 44. Glycine 45 and arginine 49 together coordinate ATP. UMP contacts are provided by residues aspartate 66 and 114-120; that span reads VVAGQTT. Threonine 140, phenylalanine 146, and aspartate 149 together coordinate ATP.

It belongs to the UMP kinase family. Homohexamer.

Its subcellular location is the cytoplasm. It carries out the reaction UMP + ATP = UDP + ADP. It functions in the pathway pyrimidine metabolism; CTP biosynthesis via de novo pathway; UDP from UMP (UMPK route): step 1/1. With respect to regulation, inhibited by UTP. Its function is as follows. Catalyzes the reversible phosphorylation of UMP to UDP. The sequence is that of Uridylate kinase from Halobacterium salinarum (strain ATCC 29341 / DSM 671 / R1).